Here is a 230-residue protein sequence, read N- to C-terminus: Ribonuclease HII (230 aa).

Residues 28-217 (FRIAGIDEAG…VKEHLPSQPD (190 aa)) enclose the RNase H type-2 domain. Positions 34, 35, and 126 each coordinate a divalent metal cation. The interval 211-230 (HLPSQPDCDTAGPSTGLFSF) is disordered.

This sequence belongs to the RNase HII family. Mn(2+) is required as a cofactor. Mg(2+) serves as cofactor.

Its subcellular location is the cytoplasm. The enzyme catalyses Endonucleolytic cleavage to 5'-phosphomonoester.. Its function is as follows. Endonuclease that specifically degrades the RNA of RNA-DNA hybrids. This is Ribonuclease HII from Geobacter sp. (strain M21).